We begin with the raw amino-acid sequence, 290 residues long: Ankyrin repeat and SOCS box protein 9 (290 aa).

Methionine 1 carries the N-acetylmethionine modification. A compositionally biased stretch (basic and acidic residues) spans methionine 1–arginine 11. The disordered stretch occupies residues methionine 1 to phenylalanine 20. 6 ANK repeats span residues serine 31 to isoleucine 60, aspartate 64 to glycine 93, aspartate 97 to proline 126, glutamate 129 to tyrosine 158, histidine 162 to glutamine 191, and glycine 194 to alanine 223. One can recognise an SOCS box domain in the interval proline 236 to leucine 290.

The protein belongs to the ankyrin SOCS box (ASB) family. As to quaternary structure, substrate-recognition component of the ECS(ASB9) complex, composed of ASB9, CUL5, ELOB, ELOC and RNF7/RBX2.

It localises to the mitochondrion. It functions in the pathway protein modification; protein ubiquitination. Substrate-recognition component of a cullin-5-RING E3 ubiquitin-protein ligase complex (ECS complex, also named CRL5 complex), which mediates the ubiquitination and subsequent proteasomal degradation of target proteins. The ECS(ASB9) complex catalyzes ubiquitination of creatine kinases CKB and CKMT1A. This is Ankyrin repeat and SOCS box protein 9 from Mus musculus (Mouse).